An 855-amino-acid chain; its full sequence is Protein translocase subunit SecA (855 aa).

ATP contacts are provided by residues Gln85, 103-107 (GEGKT), and Asp492. Residues 794–845 (AAIHEESSSAAAPGPGQNQPGGPGGPSAGPVAPVRNLDKHGRNELCPCGSGK) are disordered. Low complexity predominate over residues 801–811 (SSAAAPGPGQN). 4 residues coordinate Zn(2+): Cys839, Cys841, Cys850, and Cys851.

The protein belongs to the SecA family. As to quaternary structure, monomer and homodimer. Part of the essential Sec protein translocation apparatus which comprises SecA, SecYEG and auxiliary proteins SecDF. Other proteins may also be involved. The cofactor is Zn(2+).

The protein resides in the cell membrane. Its subcellular location is the cytoplasm. It carries out the reaction ATP + H2O + cellular proteinSide 1 = ADP + phosphate + cellular proteinSide 2.. Functionally, part of the Sec protein translocase complex. Interacts with the SecYEG preprotein conducting channel. Has a central role in coupling the hydrolysis of ATP to the transfer of proteins into and across the cell membrane, serving as an ATP-driven molecular motor driving the stepwise translocation of polypeptide chains across the membrane. This chain is Protein translocase subunit SecA, found in Clostridium beijerinckii (strain ATCC 51743 / NCIMB 8052) (Clostridium acetobutylicum).